The chain runs to 165 residues: Protein SprT (165 aa).

A SprT-like domain is found at 22-163; sequence LAQANLKLDR…RCVHCGEPLV (142 aa). Zn(2+) is bound at residue histidine 78. Glutamate 79 is an active-site residue. Histidine 82 provides a ligand contact to Zn(2+).

The protein belongs to the SprT family. Requires Zn(2+) as cofactor.

Its subcellular location is the cytoplasm. The sequence is that of Protein SprT from Salmonella paratyphi A (strain ATCC 9150 / SARB42).